The sequence spans 331 residues: 2-keto-3-deoxygluconate permease (331 aa).

10 helical membrane passes run 10 to 30 (IPGG…TLAP), 42 to 62 (GMIS…GASI), 77 to 97 (LVLT…MFIP), 100 to 120 (GIQT…AMDM), 141 to 161 (AFVL…LGSA), 163 to 183 (LASF…IGFA), 200 to 220 (PVLI…NVIM), 224 to 244 (LLGI…LIIA), 254 to 274 (TAGV…MIIA), and 289 to 309 (ALVA…TALY).

The protein belongs to the KdgT transporter family.

The protein resides in the cell inner membrane. It carries out the reaction 2-dehydro-3-deoxy-D-gluconate(in) + H(+)(in) = 2-dehydro-3-deoxy-D-gluconate(out) + H(+)(out). Its function is as follows. Catalyzes the proton-dependent uptake of 2-keto-3-deoxygluconate (KDG) into the cell. The chain is 2-keto-3-deoxygluconate permease from Enterobacter sp. (strain 638).